A 698-amino-acid chain; its full sequence is Elongation factor G (698 aa).

Residues 11-291 (THFRNIGIAA…AVVDYLPSPL (281 aa)) form the tr-type G domain. GTP-binding positions include 20-27 (AHIDAGKT), 90-94 (DTPGH), and 144-147 (NKMD).

The protein belongs to the TRAFAC class translation factor GTPase superfamily. Classic translation factor GTPase family. EF-G/EF-2 subfamily.

It localises to the cytoplasm. Functionally, catalyzes the GTP-dependent ribosomal translocation step during translation elongation. During this step, the ribosome changes from the pre-translocational (PRE) to the post-translocational (POST) state as the newly formed A-site-bound peptidyl-tRNA and P-site-bound deacylated tRNA move to the P and E sites, respectively. Catalyzes the coordinated movement of the two tRNA molecules, the mRNA and conformational changes in the ribosome. The chain is Elongation factor G from Deinococcus radiodurans (strain ATCC 13939 / DSM 20539 / JCM 16871 / CCUG 27074 / LMG 4051 / NBRC 15346 / NCIMB 9279 / VKM B-1422 / R1).